The following is a 334-amino-acid chain: Protein-methionine-sulfoxide reductase catalytic subunit MsrP (334 aa).

Residues 1–44 constitute a signal peptide (tat-type signal); sequence MKKNQFLKESDVTAESVFFMKRRQVLKALGISAAALSLPHAAHA. Residues Asn-88, 91–92, Cys-146, Thr-181, Asn-233, Arg-238, and 249–251 contribute to the Mo-molybdopterin site; these read YE and GIK.

It belongs to the MsrP family. In terms of assembly, heterodimer of a catalytic subunit (MsrP) and a heme-binding subunit (MsrQ). The cofactor is Mo-molybdopterin. Post-translationally, predicted to be exported by the Tat system. The position of the signal peptide cleavage has not been experimentally proven.

It is found in the periplasm. It carries out the reaction L-methionyl-[protein] + a quinone + H2O = L-methionyl-(S)-S-oxide-[protein] + a quinol. The enzyme catalyses L-methionyl-[protein] + a quinone + H2O = L-methionyl-(R)-S-oxide-[protein] + a quinol. In terms of biological role, part of the MsrPQ system that repairs oxidized periplasmic proteins containing methionine sulfoxide residues (Met-O), using respiratory chain electrons. Thus protects these proteins from oxidative-stress damage caused by reactive species of oxygen and chlorine generated by the host defense mechanisms. MsrPQ is essential for the maintenance of envelope integrity under bleach stress, rescuing a wide series of structurally unrelated periplasmic proteins from methionine oxidation, including the primary periplasmic chaperone SurA and the lipoprotein Pal. The catalytic subunit MsrP is non-stereospecific, being able to reduce both (R-) and (S-) diastereoisomers of methionine sulfoxide. The sequence is that of Protein-methionine-sulfoxide reductase catalytic subunit MsrP from Escherichia coli O9:H4 (strain HS).